A 113-amino-acid chain; its full sequence is Nucleoid-associated protein Cthe_2143 (113 aa).

Belongs to the YbaB/EbfC family. As to quaternary structure, homodimer.

The protein resides in the cytoplasm. Its subcellular location is the nucleoid. Its function is as follows. Binds to DNA and alters its conformation. May be involved in regulation of gene expression, nucleoid organization and DNA protection. This Acetivibrio thermocellus (strain ATCC 27405 / DSM 1237 / JCM 9322 / NBRC 103400 / NCIMB 10682 / NRRL B-4536 / VPI 7372) (Clostridium thermocellum) protein is Nucleoid-associated protein Cthe_2143.